The following is a 172-amino-acid chain: S-ribosylhomocysteine lyase (172 aa).

3 residues coordinate Fe cation: histidine 54, histidine 58, and cysteine 128.

Belongs to the LuxS family. In terms of assembly, homodimer. Fe cation serves as cofactor.

It carries out the reaction S-(5-deoxy-D-ribos-5-yl)-L-homocysteine = (S)-4,5-dihydroxypentane-2,3-dione + L-homocysteine. Functionally, involved in the synthesis of autoinducer 2 (AI-2) which is secreted by bacteria and is used to communicate both the cell density and the metabolic potential of the environment. The regulation of gene expression in response to changes in cell density is called quorum sensing. Catalyzes the transformation of S-ribosylhomocysteine (RHC) to homocysteine (HC) and 4,5-dihydroxy-2,3-pentadione (DPD). This is S-ribosylhomocysteine lyase from Vibrio alginolyticus.